The sequence spans 318 residues: tRNA U34 carboxymethyltransferase (318 aa).

7 residues coordinate carboxy-S-adenosyl-L-methionine: Lys88, Trp102, Lys107, Gly126, Met192, Tyr196, and Arg311.

This sequence belongs to the class I-like SAM-binding methyltransferase superfamily. CmoB family. Homotetramer.

It catalyses the reaction carboxy-S-adenosyl-L-methionine + 5-hydroxyuridine(34) in tRNA = 5-carboxymethoxyuridine(34) in tRNA + S-adenosyl-L-homocysteine + H(+). Catalyzes carboxymethyl transfer from carboxy-S-adenosyl-L-methionine (Cx-SAM) to 5-hydroxyuridine (ho5U) to form 5-carboxymethoxyuridine (cmo5U) at position 34 in tRNAs. This chain is tRNA U34 carboxymethyltransferase, found in Pseudomonas fluorescens (strain ATCC BAA-477 / NRRL B-23932 / Pf-5).